Here is a 133-residue protein sequence, read N- to C-terminus: Peptide methionine sulfoxide reductase MsrB (133 aa).

Residues 1–12 are compositionally biased toward basic and acidic residues; that stretch reads MSEKVQKSEHEW. The tract at residues 1–36 is disordered; it reads MSEKVQKSEHEWQQQLTPEQYRVTREKGTERPFTGD. The MsrB domain maps to 9–132; sequence EHEWQQQLTP…NSVSLDFHPG (124 aa). Residues C48, C51, C97, and C100 each contribute to the Zn(2+) site. The active-site Nucleophile is the C121.

This sequence belongs to the MsrB Met sulfoxide reductase family. Zn(2+) is required as a cofactor.

The catalysed reaction is L-methionyl-[protein] + [thioredoxin]-disulfide + H2O = L-methionyl-(R)-S-oxide-[protein] + [thioredoxin]-dithiol. This chain is Peptide methionine sulfoxide reductase MsrB, found in Chromohalobacter salexigens (strain ATCC BAA-138 / DSM 3043 / CIP 106854 / NCIMB 13768 / 1H11).